Reading from the N-terminus, the 1087-residue chain is A-kinase anchor protein 9 (1087 aa).

Positions 5-461 form a coiled coil; it reads EVQCQAEKVR…REREKMERIQ (457 aa). Positions 559-572 are PKA-RII subunit binding domain; that stretch reads SLQKVLEEKVAAAL. The stretch at 614–773 forms a coiled coil; sequence MESDVSALTW…SEKEDKTEVQ (160 aa). Residues 667–685 show a composition bias toward basic and acidic residues; it reads VQDSETKQRERERQSRLHG. Residues 667 to 691 are disordered; the sequence is VQDSETKQRERERQSRLHGDLGVLE.

As to quaternary structure, interacts with the regulatory region of protein kinase N (PKN), protein phosphatase 2A (PP2A), protein phosphatase 1 (PP1) and the immature non-phosphorylated form of PKC epsilon. Interacts with CIP4 and FNBP1. Interacts with chloride intracellular channel proteins CLIC1, CLIC4 and CLIC5. CSNK1D binding promotes its centrosomal subcellular location. Interacts with GM130/GOLGA2; leading to recruitment to the Golgi apparatus. Interacts with KCNQ1; targets protein kinase A (PKA) catalytic and regulatory subunits and protein phosphatase 1 (PP1), to the heterodimer KCNQ1-KCNE1. Interacts with PDE4DIP; this interaction stabilizes both proteins. In complex with PDE4DIP, recruits CAMSAP2 to the Golgi apparatus. Forms a pericentrosomal complex with CDK5RAP2, EB1/MAPRE1 and PDE4DIP; within this complex, MAPRE1 binding to CDK5RAP2 may be mediated by PDE4DIP. The interaction with PDE4DIP is isoform-specific. Interacts with MAPRE1 and MAPRE3. Interacts (via C-terminus) with CAMSAP2; this interaction is much stronger in the presence of PDE4DIP. Interacts with CAMSAP3. Interacts (via C-terminus) with the gamma-tubulin ring complex (gamma-TuRC), composed of gamma-tubulin, TUBGCP2, TUBGCP3, TUBGCP4, TUBGCP5 and TUBGCP6. As to expression, highly expressed in gastric parietal cells.

The protein resides in the golgi apparatus. The protein localises to the cytoplasm. It is found in the cytoskeleton. Its subcellular location is the microtubule organizing center. It localises to the centrosome. In terms of biological role, scaffolding protein that assembles several protein kinases and phosphatases on the centrosome and Golgi apparatus. Required to maintain the integrity of the Golgi apparatus. Required for microtubule nucleation at the cis-side of the Golgi apparatus. Required for association of the centrosomes with the poles of the bipolar mitotic spindle during metaphase. In complex with PDE4DIP, recruits CAMSAP2 to the Golgi apparatus and tethers non-centrosomal minus-end microtubules to the Golgi, an important step for polarized cell movement. In complex with PDE4DIP, EB1/MAPRE1 and CDK5RAP2, contributes to microtubules nucleation and extension also from the centrosome to the cell periphery. The interaction with PDE4DIP is isoform-specific. The protein is A-kinase anchor protein 9 (AKAP9) of Oryctolagus cuniculus (Rabbit).